The sequence spans 99 residues: Aspartyl/glutamyl-tRNA(Asn/Gln) amidotransferase subunit C (99 aa).

The protein belongs to the GatC family. As to quaternary structure, heterotrimer of A, B and C subunits.

The catalysed reaction is L-glutamyl-tRNA(Gln) + L-glutamine + ATP + H2O = L-glutaminyl-tRNA(Gln) + L-glutamate + ADP + phosphate + H(+). It carries out the reaction L-aspartyl-tRNA(Asn) + L-glutamine + ATP + H2O = L-asparaginyl-tRNA(Asn) + L-glutamate + ADP + phosphate + 2 H(+). Allows the formation of correctly charged Asn-tRNA(Asn) or Gln-tRNA(Gln) through the transamidation of misacylated Asp-tRNA(Asn) or Glu-tRNA(Gln) in organisms which lack either or both of asparaginyl-tRNA or glutaminyl-tRNA synthetases. The reaction takes place in the presence of glutamine and ATP through an activated phospho-Asp-tRNA(Asn) or phospho-Glu-tRNA(Gln). The polypeptide is Aspartyl/glutamyl-tRNA(Asn/Gln) amidotransferase subunit C (Paraburkholderia phymatum (strain DSM 17167 / CIP 108236 / LMG 21445 / STM815) (Burkholderia phymatum)).